Reading from the N-terminus, the 159-residue chain is NADH-quinone oxidoreductase subunit B 2 (159 aa).

The [4Fe-4S] cluster site is built by C37, C38, C102, and C132.

This sequence belongs to the complex I 20 kDa subunit family. NDH-1 is composed of 14 different subunits. Subunits NuoB, C, D, E, F, and G constitute the peripheral sector of the complex. [4Fe-4S] cluster serves as cofactor.

It is found in the cell inner membrane. It catalyses the reaction a quinone + NADH + 5 H(+)(in) = a quinol + NAD(+) + 4 H(+)(out). NDH-1 shuttles electrons from NADH, via FMN and iron-sulfur (Fe-S) centers, to quinones in the respiratory chain. Couples the redox reaction to proton translocation (for every two electrons transferred, four hydrogen ions are translocated across the cytoplasmic membrane), and thus conserves the redox energy in a proton gradient. The sequence is that of NADH-quinone oxidoreductase subunit B 2 from Azoarcus sp. (strain BH72).